A 27-amino-acid chain; its full sequence is Trypsin inhibitor 1 (27 aa).

In terms of assembly, homodimer. Contains disulfide bonds. Post-translationally, glycosylated.

Its function is as follows. Inhibits trypsin (IC(50)=1.25 uM) but not chymotrypsin or papain. Has antibacterial activity against S.enterica ATCC 10708 (MIC=5 ug/ml) and S.aureus ATCC 25923 (MIC=5 ug/ml) but not against B.subtilis ATCC 6633 or P.aeruginosa ATCC 25619. Has no hemolytic activity against human erythrocytes. Is not toxic to mice. This chain is Trypsin inhibitor 1, found in Jatropha curcas (Barbados nut).